The following is a 277-amino-acid chain: MASRGVVGLFLLSALPLLCLELRRGIPSLGIKDLILLSGRIFLLLALLTLVISVTTSWFNSLKPSQGHLKEGEKENEKRRRLVRERQQEAQGEKASRYIENVLKPQQEMKLKKLEERFYQMTGETWKLTAGHRLLEGDEDSEFENSSQASFETINGEAARRQNLPKFSTEISPAARPLLRKEVPDLPEEPSETAEEVVTVALRCPNGRVLRRRFFKSWNSQVLLDWMMKVGYHKSLYRLSTSFPRRALEVEGGSSLEDIGITVDTVLNVEEKEQSSQ.

A topological domain (cytoplasmic) is located at residue Met1. The chain crosses the membrane as a helical span at residues 2-22; that stretch reads ASRGVVGLFLLSALPLLCLEL. The Lumenal portion of the chain corresponds to 23-33; it reads RRGIPSLGIKD. A helical transmembrane segment spans residues 34 to 54; the sequence is LILLSGRIFLLLALLTLVISV. At 55–277 the chain is on the cytoplasmic side; the sequence is TTSWFNSLKP…NVEEKEQSSQ (223 aa). Residues 64 to 89 are disordered; it reads PSQGHLKEGEKENEKRRRLVRERQQE. Over residues 68-89 the composition is skewed to basic and acidic residues; that stretch reads HLKEGEKENEKRRRLVRERQQE. Residues 193–269 form the UBX domain; it reads TAEEVVTVAL…GITVDTVLNV (77 aa).

As to quaternary structure, interacts with SYVN1 and VCP. In terms of tissue distribution, highly expressed in gonads. In testis, expressed in post-meiotic round spermatids, while in ovaries it is expressed in granulosa cells.

It localises to the endoplasmic reticulum membrane. Involved in endoplasmic reticulum-associated degradation (ERAD) for misfolded lumenal proteins, possibly by tethering VCP to the endoplasmic reticulum membrane. May play a role in reproduction. The polypeptide is UBX domain-containing protein 8 (Ubxn8) (Mus musculus (Mouse)).